Consider the following 320-residue polypeptide: MVTVVDRVTNRRLRHPEKAHRPDTSVQKKPDWIRVKAPTSPVYKETHGIVRTHKLVTVCEEAGCPNIGECWSQRHASFMILGEICTRACAFCNVATGIPLAVDDDEPERVADAVARMELKHVVITSVDRDDLADGGAEHFAKVIYAIRRKAPKTTIEVLTPDFRHKDGALEVVVAAKPDVFNHNLETVPSKYLKVRPGARYFHSIRLLQRVKELDPTIFTKSGIMVGLGEERNEILQLMDDLRTADVDFMTIGQYLQPTRKHHPVIRFVPPEEFESFAKIGKVKGFLHMASNPLTRSSHHAGDDFAILQKARDEKFALQR.

The interval 1–29 (MVTVVDRVTNRRLRHPEKAHRPDTSVQKK) is disordered. Basic and acidic residues predominate over residues 19-29 (AHRPDTSVQKK). [4Fe-4S] cluster contacts are provided by Cys-59, Cys-64, Cys-70, Cys-85, Cys-89, Cys-92, and Ser-298. The Radical SAM core domain occupies 71 to 287 (WSQRHASFMI…AKIGKVKGFL (217 aa)).

Belongs to the radical SAM superfamily. Lipoyl synthase family. Requires [4Fe-4S] cluster as cofactor.

Its subcellular location is the cytoplasm. The enzyme catalyses [[Fe-S] cluster scaffold protein carrying a second [4Fe-4S](2+) cluster] + N(6)-octanoyl-L-lysyl-[protein] + 2 oxidized [2Fe-2S]-[ferredoxin] + 2 S-adenosyl-L-methionine + 4 H(+) = [[Fe-S] cluster scaffold protein] + N(6)-[(R)-dihydrolipoyl]-L-lysyl-[protein] + 4 Fe(3+) + 2 hydrogen sulfide + 2 5'-deoxyadenosine + 2 L-methionine + 2 reduced [2Fe-2S]-[ferredoxin]. Its pathway is protein modification; protein lipoylation via endogenous pathway; protein N(6)-(lipoyl)lysine from octanoyl-[acyl-carrier-protein]: step 2/2. Its function is as follows. Catalyzes the radical-mediated insertion of two sulfur atoms into the C-6 and C-8 positions of the octanoyl moiety bound to the lipoyl domains of lipoate-dependent enzymes, thereby converting the octanoylated domains into lipoylated derivatives. The sequence is that of Lipoyl synthase from Bartonella tribocorum (strain CIP 105476 / IBS 506).